The chain runs to 357 residues: Ribosomal RNA large subunit methyltransferase M (357 aa).

S-adenosyl-L-methionine is bound by residues S183, 216-219 (APGG), D235, D255, and D271. The active-site Proton acceptor is the K300.

It belongs to the class I-like SAM-binding methyltransferase superfamily. RNA methyltransferase RlmE family. RlmM subfamily. As to quaternary structure, monomer.

The protein resides in the cytoplasm. The catalysed reaction is cytidine(2498) in 23S rRNA + S-adenosyl-L-methionine = 2'-O-methylcytidine(2498) in 23S rRNA + S-adenosyl-L-homocysteine + H(+). Its function is as follows. Catalyzes the 2'-O-methylation at nucleotide C2498 in 23S rRNA. The chain is Ribosomal RNA large subunit methyltransferase M from Pseudomonas syringae pv. tomato (strain ATCC BAA-871 / DC3000).